The primary structure comprises 488 residues: Calcium uniporter protein, mitochondrial (488 aa).

A mitochondrion-targeting transit peptide spans 1 to 74; the sequence is MRALVSRTPI…RSFQLSASSR (74 aa). The tract at residues 65–117 is disordered; sequence RSFQLSASSRDKRGPQSAEPDPLERLEVKKVQQQHENEKDDSGRDTKSGGKVA. At 75–339 the chain is on the mitochondrial matrix side; the sequence is DKRGPQSAEP…ECDALAHRGA (265 aa). Residues 86-112 are compositionally biased toward basic and acidic residues; sequence PLERLEVKKVQQQHENEKDDSGRDTKS. A helical membrane pass occupies residues 340–361; it reads QRVALGGFGILAFWWYIVYKLT. At 362–370 the chain is on the mitochondrial intermembrane side; sequence FETDLGWDT. The Selectivity filter motif lies at 368-376; sequence WDTMEPVTY. The chain crosses the membrane as a helical span at residues 371–391; sequence MEPVTYLVSLSTLMGGYLWFL. Glu-372 is a Ca(2+) binding site. Residues 392 to 488 lie on the Mitochondrial matrix side of the membrane; sequence YHNREISYRS…ERPKDDRDDD (97 aa). The disordered stretch occupies residues 464–488; that stretch reads ALKKERRLKNGSQKEERPKDDRDDD. Residues 475 to 488 are compositionally biased toward basic and acidic residues; sequence SQKEERPKDDRDDD.

This sequence belongs to the MCU (TC 1.A.77) family. Homotetramer, assembles in a dimer or dimers configuration with two interfaces.

It localises to the mitochondrion inner membrane. The enzyme catalyses Ca(2+)(in) = Ca(2+)(out). Inhibited by ruthenium red or its derivative Ru360. Its function is as follows. Highly selective calcium channel localized to the inner mitochondrial membrane, which mediates calcium uptake into the mitochondrial matrix. Mitochondrial calcium homeostasis plays key roles in cellular physiology and regulates ATP production, cytoplasmic calcium signals and activation of cell death pathways. Sufficient to operate as a pore-forming channel without the need of calcium-sensor or auxiliary subunit. The protein is Calcium uniporter protein, mitochondrial of Neosartorya fischeri (strain ATCC 1020 / DSM 3700 / CBS 544.65 / FGSC A1164 / JCM 1740 / NRRL 181 / WB 181) (Aspergillus fischerianus).